The following is a 730-amino-acid chain: MRAALVAVAALLWVALHAAAWVNDVSPKMYVQFGEERVQRFLGNESHKDHFKLLEKDHNSLLVGARNIVYNISLRDLTEFTEQRIEWHSSGAHRELCYLKGKSEDDCQNYIRVLAKIDDDRVLICGTNAYKPLCRHYALKDGDYVVEKEYEGRGLCPFDPDHNSTAIYSEGQLYSATVADFSGTDPLIYRGPLRTERSDLKQLNAPNFVNTMEYNDFIFFFFRETAVEYINCGKAIYSRVARVCKHDKGGPHQFGDRWTSFLKSRLNCSVPGDYPFYFNEIQSTSDIIEGNYGGQVEKLIYGVFTTPVNSIGGSAVCAFSMKSILESFDGPFKEQETMNSNWLAVPSLKVPEPRPGQCVNDSRTLPDVSVNFVKSHTLMDEAVPAFFTRPILIRISLQYRFTKIAVDQQVRTPDGKAYDVLFIGTDDGKVIKALNSASFDSSDTVDSVVIEELQVLPPGVPVKNLYVVRMDGDDSKLVVVSDDEILAIKLHRCGSDKITNCRECVSLQDPYCAWDNVELKCTAVGSPDWSAGKRRFIQNISLGEHKACGGRPQTEIVASPVPTQPTTKSSGDPVHSIHQAEFEPEIDNEIVIGVDDSNVIPNTLAEINHAGSKLPSSQEKLPIYTAETLTIAIVTSCLGALVVGFISGFLFSRRCRGEDYTDMPFPDQRHQLNRLTEAGLNADSPYLPPCANNKAAINLVLNVPPKNANGKNANSSAENKPIQKVKKTYI.

Positions 1–20 (MRAALVAVAALLWVALHAAA) are cleaved as a signal peptide. The Extracellular portion of the chain corresponds to 21-630 (WVNDVSPKMY…LPIYTAETLT (610 aa)). The region spanning 28–490 (KMYVQFGEER…SDDEILAIKL (463 aa)) is the Sema domain. N-linked (GlcNAc...) asparagine glycosylation is found at Asn-44 and Asn-71. Intrachain disulfides connect Cys-97-Cys-107 and Cys-125-Cys-134. 2 N-linked (GlcNAc...) asparagine glycosylation sites follow: Asn-163 and Asn-267. Cystine bridges form between Cys-244–Cys-358 and Cys-268–Cys-317. The N-linked (GlcNAc...) asparagine glycan is linked to Asn-360. Disulfide bonds link Cys-493–Cys-512 and Cys-504–Cys-521. N-linked (GlcNAc...) asparagine glycosylation occurs at Asn-539. A helical membrane pass occupies residues 631 to 651 (IAIVTSCLGALVVGFISGFLF). At 652 to 730 (SRRCRGEDYT…PIQKVKKTYI (79 aa)) the chain is on the cytoplasmic side. Residues 708–720 (ANGKNANSSAENK) show a composition bias toward low complexity. The disordered stretch occupies residues 708–730 (ANGKNANSSAENKPIQKVKKTYI).

It belongs to the semaphorin family. As to expression, dynamically expressed on a subset of axon pathways in the developing CNS and on circumferential bands of epithelial cells in developing limb buds.

The protein localises to the membrane. Functionally, plays a role in growth cones guidance. The chain is Semaphorin-1A (SEMA-1A) from Schistocerca americana (American grasshopper).